The sequence spans 496 residues: Glutathione reductase, cytosolic (496 aa).

Residues serine 32, glycine 33, glutamate 52, threonine 69, cysteine 70, and lysine 78 each coordinate FAD. Residue serine 32 coordinates glutathione. Cysteine 70 and cysteine 75 form a disulfide bridge. Tyrosine 127 serves as a coordination point for glutathione. An FAD-binding site is contributed by glycine 143. 6 residues coordinate NADP(+): glycine 208, isoleucine 211, glutamate 214, arginine 231, arginine 237, and glycine 294. Residues aspartate 335 and threonine 343 each coordinate FAD. Position 373 (alanine 373) interacts with NADP(+). Histidine 469 is a binding site for FAD. Histidine 469 serves as the catalytic Proton acceptor.

The protein belongs to the class-I pyridine nucleotide-disulfide oxidoreductase family. As to quaternary structure, homodimer. Requires FAD as cofactor.

Its subcellular location is the cytoplasm. It carries out the reaction 2 glutathione + NADP(+) = glutathione disulfide + NADPH + H(+). Catalyzes the reduction of glutathione disulfide (GSSG) to reduced glutathione (GSH). Constitutes the major mechanism to maintain a high GSH:GSSG ratio in the cytosol. This is Glutathione reductase, cytosolic (GRC2) from Oryza sativa subsp. japonica (Rice).